A 189-amino-acid chain; its full sequence is MAREGEGGRGRDREERDSEFMDRLVHINRVAKVVKGGRRFGFAALVVVGDQKGRVGFGHGKAREVPEAIRKATESAKRSLIRVPLREGRTLHHDVNGRHGAGRVVLRAAPAGTGIIAGGPMRAIFETLGMHDVVAKSQGSSNPYNMVRATFDALGRQDSPRAVAARRNLKVSVLQGRRPGGEAEAASEA.

In terms of domain architecture, S5 DRBM spans 20–83; that stretch reads FMDRLVHINR…ESAKRSLIRV (64 aa).

The protein belongs to the universal ribosomal protein uS5 family. As to quaternary structure, part of the 30S ribosomal subunit. Contacts proteins S4 and S8.

In terms of biological role, with S4 and S12 plays an important role in translational accuracy. Functionally, located at the back of the 30S subunit body where it stabilizes the conformation of the head with respect to the body. The chain is Small ribosomal subunit protein uS5 from Methylocella silvestris (strain DSM 15510 / CIP 108128 / LMG 27833 / NCIMB 13906 / BL2).